Consider the following 339-residue polypeptide: MSNYPKYRVAAVQASPVLLDLDATIDKTCRLVDEAAANGAKVIAFPEAFIPGYPWWIWLGNADYGMKYYIQLYKNSVEIPSLAVQKLSSAGTNKVYFCVSVTEKDGGSLYLTQLWFDPNGDLIGKHRKLKATNAEKTIWGDGDGSMMPVFETEFGNLGGLQCWEHFLPLNVAAMASMNEQVHVASWPIGMPQEGHLFGPEQCVTATKYYAISNQVFCLLSSQIWTEEQRDKICETEEQRNFMKVGHGFSKIIAPNGMEIGNKLAHDEEGITYADIDLEQIIPGKFLIDSAGHYSTPGFLSLSFDRTEKKPIKHIGESAQETVTYEEIQYGNKANVKVHS.

In terms of domain architecture, CN hydrolase spans 7 to 277 (YRVAAVQASP…EGITYADIDL (271 aa)). Glutamate 47 (proton acceptor) is an active-site residue. Lysine 128 serves as the catalytic Proton donor. Cysteine 162 acts as the Nucleophile in catalysis.

The protein belongs to the carbon-nitrogen hydrolase superfamily. Nitrilase family.

It catalyses the reaction a nitrile + 2 H2O = a carboxylate + NH4(+). This Bacillus sp. (strain OxB-1) protein is Nitrilase (nit).